Consider the following 343-residue polypeptide: Cytoplasmic tRNA 2-thiolation protein 1 (343 aa).

It belongs to the TtcA family. CTU1/NCS6/ATPBD3 subfamily.

It localises to the cytoplasm. The protein operates within tRNA modification; 5-methoxycarbonylmethyl-2-thiouridine-tRNA biosynthesis. Its function is as follows. Plays a central role in 2-thiolation of mcm(5)S(2)U at tRNA wobble positions of tRNA(Lys), tRNA(Glu) and tRNA(Gln). Directly binds tRNAs and probably acts by catalyzing adenylation of tRNAs, an intermediate required for 2-thiolation. It is unclear whether it acts as a sulfurtransferase that transfers sulfur from thiocarboxylated URM1 onto the uridine of tRNAs at wobble position. This chain is Cytoplasmic tRNA 2-thiolation protein 1, found in Drosophila yakuba (Fruit fly).